We begin with the raw amino-acid sequence, 640 residues long: F-box protein MET30 (640 aa).

The span at 1–19 (MRRERQRMMSFEDKDKDDL) shows a compositional bias: basic and acidic residues. Residues 1-84 (MRRERQRMMS…ATNDSGTRVQ (84 aa)) form a disordered region. Residues 1-299 (MRRERQRMMS…KGHCRIQEFK (299 aa)) form a necessary to mediate nuclear localization region. Polar residues-rich tracts occupy residues 45–56 (TGSSDDLAQGSS) and 64–82 (ATRS…SGTR). Ser-67 carries the phosphoserine modification. An interaction with SKP1/CBF3D region spans residues 180–225 (KIDFISILPQELSLKILSYLDCQSLCNATRVCRKWQKLADDDRVWY). Positions 180–277 (KIDFISILPQ…TQTTRPWKVI (98 aa)) are important for mediating homomultimerization. Positions 181–227 (IDFISILPQELSLKILSYLDCQSLCNATRVCRKWQKLADDDRVWYHM) constitute an F-box domain. Residues 277–640 (IYRERFKVES…VKMYKFDLND (364 aa)) form an interaction with MET4 region. 8 WD repeats span residues 300 to 328 (GHMD…GIWD), 340 to 368 (GHSD…RVWN), 380 to 408 (GHSD…KVWH), 419 to 449 (GHTE…RMWD), 461 to 499 (GHVG…TMTD), 509 to 538 (NEQE…KLWD), 550 to 578 (GHVE…KVWD), and 607 to 635 (DKVA…KMYK). The span at 481–495 (ATDNTSDGSSPQDDP) shows a compositional bias: polar residues. The interval 481-516 (ATDNTSDGSSPQDDPTMTDGADESDTPSNEQETVLD) is disordered.

The protein belongs to the WD repeat MET30/SCONB/SCON-2 family. In terms of assembly, homomultimer. Interacts with CDC53 and SKP1/CBF3D to form the E3 ubiquitin ligase complex SCF(Met30). Interacts with MET4.

It localises to the cytoplasm. Its subcellular location is the nucleus. It functions in the pathway protein modification; protein ubiquitination. In terms of biological role, substrate-recognition component of the SCF(Met30) complex, an E3 ubiquitin ligase complex that mediates the ubiquitination and subsequent proteasomal degradation of target proteins. Negatively regulates sulfur amino acids biosynthesis genes expression. Controls cell cycle function (being required for the G1/S transition and M-phase but not the S-phase), sulfur metabolism, and methionine biosynthesis as part of the SCF(Met30) complex. Required for the efficient binding of CDC45 and MCM proteins to origins of replication. Required for efficient expression of G1 cyclins. The SCF(Met30) complex catalyzes ubiquitination and degradation of the Cdk-inhibitory kinase SWE1. Involved in the S-adenosylmethionine (AdoMet)-mediated inhibition of the transcription function of MET4. The SCF(Met30) complex mediates ubiquitination and subsequent degradation of MET4 and the cellular response to cadmium. The SCF(Met30) complex acts as an inhibitor of autophagy by promoting ubiquitination and degradation of ATG9 in normal conditions. This Saccharomyces cerevisiae (strain ATCC 204508 / S288c) (Baker's yeast) protein is F-box protein MET30.